Here is a 117-residue protein sequence, read N- to C-terminus: Large ribosomal subunit protein bL17 (117 aa).

Belongs to the bacterial ribosomal protein bL17 family. As to quaternary structure, part of the 50S ribosomal subunit. Contacts protein L32.

The sequence is that of Large ribosomal subunit protein bL17 from Campylobacter jejuni subsp. jejuni serotype O:6 (strain 81116 / NCTC 11828).